The sequence spans 140 residues: Nucleoside diphosphate kinase (140 aa).

The ATP site is built by Lys11, Phe59, Arg87, Thr93, Arg104, and Asn114. The active-site Pros-phosphohistidine intermediate is His117.

Belongs to the NDK family. As to quaternary structure, homotetramer. Mg(2+) serves as cofactor.

The protein resides in the cytoplasm. It carries out the reaction a 2'-deoxyribonucleoside 5'-diphosphate + ATP = a 2'-deoxyribonucleoside 5'-triphosphate + ADP. The enzyme catalyses a ribonucleoside 5'-diphosphate + ATP = a ribonucleoside 5'-triphosphate + ADP. Functionally, major role in the synthesis of nucleoside triphosphates other than ATP. The ATP gamma phosphate is transferred to the NDP beta phosphate via a ping-pong mechanism, using a phosphorylated active-site intermediate. The protein is Nucleoside diphosphate kinase of Azorhizobium caulinodans (strain ATCC 43989 / DSM 5975 / JCM 20966 / LMG 6465 / NBRC 14845 / NCIMB 13405 / ORS 571).